The following is a 187-amino-acid chain: Flavin prenyltransferase LpdB (187 aa).

FMN contacts are provided by residues 10–12, S37, 88–91, and R123; these read GAS and SMKT. Positions 153 and 169 each coordinate dimethylallyl phosphate.

It belongs to the UbiX/PAD1 family.

It catalyses the reaction dimethylallyl phosphate + FMNH2 = prenylated FMNH2 + phosphate. Its function is as follows. Involved in tannin degradation. Flavin prenyltransferase that catalyzes the synthesis of the prenylated FMN cofactor (prenyl-FMN) for gallate decarboxylase LpdC. The prenyltransferase is metal-independent and links a dimethylallyl moiety from dimethylallyl monophosphate (DMAP) to the flavin N5 and C6 atoms of FMN. In Lactiplantibacillus plantarum (strain ATCC BAA-793 / NCIMB 8826 / WCFS1) (Lactobacillus plantarum), this protein is Flavin prenyltransferase LpdB.